We begin with the raw amino-acid sequence, 262 residues long: Serine/arginine-rich SC35-like splicing factor SCL30A (262 aa).

Disordered regions lie at residues 1 to 38 (MRGR…LPTS) and 115 to 262 (ENRK…SPSQ). 2 positions are modified to phosphoserine: S9 and S20. An RRM domain is found at 37 to 115 (TSLLVRNLRH…RELTVVFAEE (79 aa)). The segment covering 115 to 140 (ENRKKPTEMRTRDRGGRSNRFQDRRR) has biased composition (basic and acidic residues). Residues 150-161 (PPRRGRRSRSRS) are compositionally biased toward basic residues. Phosphoserine occurs at positions 166, 174, 176, and 178. The segment covering 180–190 (QDRRYEKERSY) has biased composition (basic and acidic residues). Residues S191 and S193 each carry the phosphoserine modification. Basic residues predominate over residues 209–226 (VKSHSRSPRRSVSPRKNR). The segment covering 234-246 (RSQSPVPRQSRSP) has biased composition (low complexity). A phosphoserine mark is found at S235, S259, and S261.

The protein belongs to the splicing factor SR family. SCL subfamily. As to quaternary structure, component of the spliceosome. Interacts with SNRNP35, CYP59 and RS2Z33.

Its subcellular location is the nucleus speckle. Functionally, involved in intron recognition and spliceosome assembly. Binds probably to multiple 5'-GAAG-3' repeats found in its third intron, suggesting autoregulation of alternative splicing. May be necessary for accurate splicing of the 3' region of introns. In Arabidopsis thaliana (Mouse-ear cress), this protein is Serine/arginine-rich SC35-like splicing factor SCL30A (SCL30A).